The primary structure comprises 87 residues: Protein Isd11 (87 aa).

The protein belongs to the complex I LYR family. As to quaternary structure, interacts with IscS; the interaction enhances cysteine desulfurase activity of IscS. Component of a complex, at least composed of IscS, Isd11 and IscU.

It localises to the mitochondrion. It functions in the pathway cofactor biosynthesis; iron-sulfur cluster biosynthesis. Participates in iron-sulfur cluster formation (ISC) pathway for iron-sulfur (Fe-S) cluster biogenesis. Enhances cysteine desulfurase activity of IscS. This is Protein Isd11 from Plasmodium falciparum (isolate 3D7).